The sequence spans 182 residues: 5-formyltetrahydrofolate cyclo-ligase (182 aa).

The interval 1-21 (MIRQRRRALTPEQQQEMGQQA) is disordered. Residues 11–21 (PEQQQEMGQQA) show a composition bias toward polar residues. Residues 128 to 135 (GMGGGFYD) and D167 contribute to the ATP site.

The protein belongs to the 5-formyltetrahydrofolate cyclo-ligase family.

The catalysed reaction is (6S)-5-formyl-5,6,7,8-tetrahydrofolate + ATP = (6R)-5,10-methenyltetrahydrofolate + ADP + phosphate. Its pathway is one-carbon metabolism; tetrahydrofolate interconversion. Involved in the removal of 5-formyltetrahydrofolate. In vitro, it is a potent inhibitor of various folate-dependent enzymes in the C1 metabolism network and in vivo it might function as a folate storage. 5-formyltetrahydrofolate is also used as an antifolate rescue agent in cancer chemotherapy. Catalyzes the irreversible ATP-dependent transformation of 5-formyltetrahydrofolate (5-CHO-THF) to form 5,10-methenyltetrahydrofolate (5,10-CH=THF). The reverse reaction is catalyzed by the serine hydroxymethyltransferase GlyA (SHMT). This Escherichia coli O157:H7 protein is 5-formyltetrahydrofolate cyclo-ligase (ygfA).